The sequence spans 199 residues: NADH-quinone oxidoreductase subunit C (199 aa).

Belongs to the complex I 30 kDa subunit family. As to quaternary structure, NDH-1 is composed of 14 different subunits. Subunits NuoB, C, D, E, F, and G constitute the peripheral sector of the complex.

It localises to the cell inner membrane. The catalysed reaction is a quinone + NADH + 5 H(+)(in) = a quinol + NAD(+) + 4 H(+)(out). NDH-1 shuttles electrons from NADH, via FMN and iron-sulfur (Fe-S) centers, to quinones in the respiratory chain. The immediate electron acceptor for the enzyme in this species is believed to be ubiquinone. Couples the redox reaction to proton translocation (for every two electrons transferred, four hydrogen ions are translocated across the cytoplasmic membrane), and thus conserves the redox energy in a proton gradient. The polypeptide is NADH-quinone oxidoreductase subunit C (Cupriavidus taiwanensis (strain DSM 17343 / BCRC 17206 / CCUG 44338 / CIP 107171 / LMG 19424 / R1) (Ralstonia taiwanensis (strain LMG 19424))).